A 430-amino-acid chain; its full sequence is Adenylosuccinate synthetase (430 aa).

Residues 12–18 (GDEGKGK) and 40–42 (GHT) contribute to the GTP site. Aspartate 13 (proton acceptor) is an active-site residue. Mg(2+)-binding residues include aspartate 13 and glycine 40. Residues 13–16 (DEGK), 38–41 (NAGH), threonine 128, arginine 142, glutamine 223, threonine 238, and arginine 302 contribute to the IMP site. Residue histidine 41 is the Proton donor of the active site. 298-304 (TTTGRPR) is a substrate binding site. Residues arginine 304, 330 to 332 (SID), and 412 to 414 (SVG) each bind GTP.

Belongs to the adenylosuccinate synthetase family. Homodimer. It depends on Mg(2+) as a cofactor.

The protein localises to the cytoplasm. It carries out the reaction IMP + L-aspartate + GTP = N(6)-(1,2-dicarboxyethyl)-AMP + GDP + phosphate + 2 H(+). It functions in the pathway purine metabolism; AMP biosynthesis via de novo pathway; AMP from IMP: step 1/2. In terms of biological role, plays an important role in the de novo pathway of purine nucleotide biosynthesis. Catalyzes the first committed step in the biosynthesis of AMP from IMP. This chain is Adenylosuccinate synthetase, found in Streptococcus uberis (strain ATCC BAA-854 / 0140J).